The primary structure comprises 54 residues: Rubredoxin (54 aa).

The Rubredoxin-like domain maps to 1 to 54 (MKKYVCVVCGYIYDPAEGDPDNGVNPGTSFEDIPDDWVCPLCGVGKDQFEPSEE). The Fe cation site is built by cysteine 6, cysteine 9, cysteine 39, and cysteine 42.

This sequence belongs to the rubredoxin family. Requires Fe(3+) as cofactor.

Its function is as follows. Rubredoxin is a small nonheme, iron protein lacking acid-labile sulfide. Its single Fe, chelated to 4 Cys, functions as an electron acceptor and may also stabilize the conformation of the molecule. Functions as an intermediate component in the electron transfer chain: NADH-&gt;NROR-&gt;Rd-&gt;FprA1/2 in which Rd serves as the proximal electron donor to the FDPs that exhibit H(2)O-forming NADH oxidase activity. Also functions as the proximal electron donor to the Dfx and revRbr proteins that display superoxide reductase (SOR) and NADH peroxidase activity, respectively. Therefore, is a key electron carrier in an efficient multienzyme complex that can scavenge O(2) and reactive oxygen species (ROS), and thus plays an important role in the oxidative stress defense system in C.acetobutylicum, an obligate anaerobic bacterium. The chain is Rubredoxin (rd) from Clostridium acetobutylicum (strain ATCC 824 / DSM 792 / JCM 1419 / IAM 19013 / LMG 5710 / NBRC 13948 / NRRL B-527 / VKM B-1787 / 2291 / W).